Consider the following 93-residue polypeptide: MRGGNLKVLVVYDITDDSLRLKVAEILKDLGLFRIQKSAFIGEMTSQERENMEEILRRQNLGPSDRIDVFPICDRDLKMHSQIGRGKFGRGPP.

Asp-13 lines the Mg(2+) pocket.

The protein belongs to the CRISPR-associated endoribonuclease Cas2 protein family. In terms of assembly, homodimer, forms a heterotetramer with a Cas1 homodimer. Mg(2+) is required as a cofactor.

In terms of biological role, CRISPR (clustered regularly interspaced short palindromic repeat), is an adaptive immune system that provides protection against mobile genetic elements (viruses, transposable elements and conjugative plasmids). CRISPR clusters contain sequences complementary to antecedent mobile elements and target invading nucleic acids. CRISPR clusters are transcribed and processed into CRISPR RNA (crRNA). Functions as a ssRNA-specific endoribonuclease. Involved in the integration of spacer DNA into the CRISPR cassette. The sequence is that of CRISPR-associated endoribonuclease Cas2 from Korarchaeum cryptofilum (strain OPF8).